A 314-amino-acid chain; its full sequence is Glutathione synthetase (314 aa).

The ATP-grasp domain occupies 125 to 311; the sequence is EKIAAQLFPQ…IAGQLFDAIE (187 aa). Residue 151–208 participates in ATP binding; that stretch reads FVQKQEQAILKPLDGMGGHSIFRSSNGDPNLNVILETLTDGGRTLAIAQRYLQQIIEG. 2 residues coordinate Mg(2+): Glu282 and Asn284.

The protein belongs to the prokaryotic GSH synthase family. Requires Mg(2+) as cofactor. The cofactor is Mn(2+).

The catalysed reaction is gamma-L-glutamyl-L-cysteine + glycine + ATP = glutathione + ADP + phosphate + H(+). The protein operates within sulfur metabolism; glutathione biosynthesis; glutathione from L-cysteine and L-glutamate: step 2/2. The sequence is that of Glutathione synthetase from Xylella fastidiosa (strain Temecula1 / ATCC 700964).